A 339-amino-acid chain; its full sequence is Type IV secretion system protein PtlH homolog (339 aa).

This sequence belongs to the GSP E family.

The chain is Type IV secretion system protein PtlH homolog (ptlH) from Bordetella bronchiseptica (strain ATCC BAA-588 / NCTC 13252 / RB50) (Alcaligenes bronchisepticus).